The sequence spans 406 residues: Sorting nexin-6 (406 aa).

Methionine 1 bears the N-acetylmethionine mark. At methionine 2 the chain carries N-acetylmethionine; in Sorting nexin-6, N-terminally processed. The tract at residues 2–179 (MEGLDDGPDF…NQDLSVRGKN (178 aa)) is interaction with PIM1. The 148-residue stretch at 26–173 (LQSDAALQVD…HVFLEYNQDL (148 aa)) folds into the PX domain. A 1,2-diacyl-sn-glycero-3-phospho-(1D-myo-inositol-4,5-bisphosphate)-binding positions include 41–47 (SERDKVK), 100–106 (FDASREK), and 114–117 (EGSM). A phosphoserine mark is found at serine 116 and serine 194. Positions 182-199 (EKLEDFFKNMVKSADGVI) are membrane-binding amphipathic helix. The 204-residue stretch at 203 to 406 (VKDVDDFFEH…NCLAVLNGDT (204 aa)) folds into the BAR domain.

The protein belongs to the sorting nexin family. In terms of assembly, forms heterodimers with BAR domain-containing sorting nexins SNX1 and SNX2. The heterodimers are proposed to self-assemble into helical arrays on the membrane to stabilize and expand local membrane curvature underlying endosomal tubule formation. Thought to be a component of the originally described retromer complex (also called SNX-BAR retromer) which is a pentamer containing the heterotrimeric retromer cargo-selective complex (CSC), also described as vacuolar protein sorting subcomplex (VPS), and a heterodimeric membrane-deforming subcomplex formed between SNX1 or SNX2 and SNX5 or SNX6 (also called SNX-BAR subcomplex); the respective CSC and SNX-BAR subcomplexes associate with low affinity. Interacts with SNX1, SNX2, VPS26A, VPS29, VPS35, CDKN1B, TGFB receptors, BACE1, BRMS1, PIP5K1C isoform 3. Interacts with DCTN1; the association with DCTN1 is involved in movement of retromer-c ontaining vesicles toward the TGN. Interacts with CDKN1B and GIT1. Interacts with PIM1; translocating SNX6 to the nucleus. Post-translationally, in vitro phosphorylated by PIM1; not affecting PIM1-dependent nuclear translocation.

It localises to the early endosome. Its subcellular location is the early endosome membrane. The protein resides in the cytoplasmic vesicle. The protein localises to the cytoplasm. It is found in the nucleus. Involved in several stages of intracellular trafficking. Interacts with membranes phosphatidylinositol 3,4-bisphosphate and/or phosphatidylinositol 4,5-bisphosphate. Acts in part as component of the retromer membrane-deforming SNX-BAR subcomplex. The SNX-BAR retromer mediates retrograde transport of cargo proteins from endosomes to the trans-Golgi network (TGN) and is involved in endosome-to-plasma membrane transport for cargo protein recycling. The SNX-BAR subcomplex functions to deform the donor membrane into a tubular profile called endosome-to-TGN transport carrier (ETC). Does not have in vitro vesicle-to-membrane remodeling activity. Involved in retrograde endosome-to-TGN transport of lysosomal enzyme receptor IGF2R. May function as link between transport vesicles and dynactin. Negatively regulates retrograde transport of BACE1 from the cell surface to the trans-Golgi network. Involved in E-cadherin sorting and degradation; inhibits PIP5K1C isoform 3-mediated E-cadherin degradation. In association with GIT1 involved in EGFR degradation. Promotes lysosomal degradation of CDKN1B. May contribute to transcription regulation. The protein is Sorting nexin-6 (SNX6) of Homo sapiens (Human).